Reading from the N-terminus, the 226-residue chain is Tyramine N-feruloyltransferase 4/11 (226 aa).

Residues 29 to 45 (HIYKLFYQIHEYHNYTH) are important in binding site and for catalytic activity. The N-acetyltransferase domain maps to 72-222 (VLLLEVSPTP…VGDALQKYAD (151 aa)).

Belongs to the acetyltransferase family. As to quaternary structure, homodimer.

The protein localises to the cytoplasm. It catalyses the reaction tyramine + (E)-feruloyl-CoA = N-[(E)-feruloyl]tyramine + CoA + H(+). Inhibited by (2-hydroxyphenyl)amino sulfinyl acetic acid 1,1-dimethylethyl ester, by DEPC and by N-ethylmaleimide. Its function is as follows. Synthesizes amides which are involved in stress response in the cell wall. Catalyzes the synthesis of hydroxycinnamic acid amides from hydroxycinnamoyl-CoA thioesters and various hydroxyphenylethylamines such as 4-coumaroyl-CoA and sinapoyl-CoA. The chain is Tyramine N-feruloyltransferase 4/11 (THT4) from Nicotiana tabacum (Common tobacco).